The chain runs to 719 residues: CRAL-TRIO domain-containing protein T23G5.2 (719 aa).

The PRELI/MSF1 domain occupies 2 to 175; sequence VQTYRSPVRI…FIEELLKKTT (174 aa). The CRAL-TRIO domain occupies 319-495; the sequence is RPTVIKQYFP…FLGGSCLTTN (177 aa). The 158-residue stretch at 524–681 folds into the GOLD domain; the sequence is HSTYTSTATW…KCRLIYYYEI (158 aa). A disordered region spans residues 700–719; it reads SSFSSIAPPTPPTPGTPRNP. The span at 707–719 shows a compositional bias: pro residues; it reads PPTPPTPGTPRNP.

The protein is CRAL-TRIO domain-containing protein T23G5.2 of Caenorhabditis elegans.